Consider the following 533-residue polypeptide: Intestinal-type alkaline phosphatase (533 aa).

An N-terminal signal peptide occupies residues 1 to 19; sequence MQGACVLLLLGLHLQLSLG. Residue Asp61 participates in Mg(2+) binding. The Zn(2+) site is built by Asp61 and Ser111. Ser111 (phosphoserine intermediate) is an active-site residue. A disulfide bridge connects residues Cys140 and Cys202. Ser174 contacts Mg(2+). Glu235 contacts Ca(2+). An N-linked (GlcNAc...) asparagine glycan is attached at Asn268. Ca(2+)-binding residues include Phe288, Glu289, and Asp304. A Mg(2+)-binding site is contributed by Glu330. 4 residues coordinate Zn(2+): Asp335, His339, Asp376, and His377. Asn429 carries an N-linked (GlcNAc...) asparagine glycan. A Zn(2+)-binding site is contributed by His451. Cys486 and Cys493 form a disulfide bridge. Asp506 carries the GPI-anchor amidated aspartate lipid modification. A propeptide spans 507 to 533 (removed in mature form); that stretch reads AAHLAASPPPLALLAGAMLLLLAPTLY.

It belongs to the alkaline phosphatase family. As to quaternary structure, homodimer. Requires Mg(2+) as cofactor. It depends on Zn(2+) as a cofactor. The cofactor is Ca(2+).

The protein resides in the cell membrane. The enzyme catalyses a phosphate monoester + H2O = an alcohol + phosphate. Alkaline phosphatase that can hydrolyze various phosphate compounds. The protein is Intestinal-type alkaline phosphatase (ALPI) of Bos taurus (Bovine).